An 897-amino-acid chain; its full sequence is Coiled-coil domain-containing protein lobo (897 aa).

Residues Glu-27 to Phe-49 are disordered. Residues Asp-40–Phe-49 show a composition bias toward acidic residues. Coiled coils occupy residues Asp-269–Leu-306 and Ser-801–Thr-858.

This sequence belongs to the DRC7 family. In terms of tissue distribution, testis-specific (at protein level).

It is found in the cell projection. The protein localises to the cilium. It localises to the flagellum. Its subcellular location is the cytoplasm. The protein resides in the cytoskeleton. It is found in the cilium axoneme. Key component of the nexin-dynein regulatory complex (N-DRC), essential for N-DRC integrity. Involved in the regulation of flagellar motility. Involved in sperm motility. Required for the sperm to enter in the coiled storage seminal receptacle (SR) tubule. This Drosophila melanogaster (Fruit fly) protein is Coiled-coil domain-containing protein lobo (lobo).